Reading from the N-terminus, the 265-residue chain is Type III pantothenate kinase (265 aa).

ATP is bound at residue 6 to 13 (DVGNTHTV). 112–115 (GADR) serves as a coordination point for substrate. Catalysis depends on Asp114, which acts as the Proton acceptor. A K(+)-binding site is contributed by Asp134. Thr137 provides a ligand contact to ATP. Thr189 serves as a coordination point for substrate.

Belongs to the type III pantothenate kinase family. Homodimer. The cofactor is NH4(+). Requires K(+) as cofactor.

The protein localises to the cytoplasm. The catalysed reaction is (R)-pantothenate + ATP = (R)-4'-phosphopantothenate + ADP + H(+). It participates in cofactor biosynthesis; coenzyme A biosynthesis; CoA from (R)-pantothenate: step 1/5. Its function is as follows. Catalyzes the phosphorylation of pantothenate (Pan), the first step in CoA biosynthesis. In Streptomyces griseus subsp. griseus (strain JCM 4626 / CBS 651.72 / NBRC 13350 / KCC S-0626 / ISP 5235), this protein is Type III pantothenate kinase.